Here is a 140-residue protein sequence, read N- to C-terminus: Nucleoside diphosphate kinase (140 aa).

ATP is bound by residues Lys-11, Phe-59, Arg-87, Thr-93, Arg-104, and Asn-114. His-117 functions as the Pros-phosphohistidine intermediate in the catalytic mechanism.

It belongs to the NDK family. In terms of assembly, homotetramer. Requires Mg(2+) as cofactor.

It localises to the cytoplasm. The enzyme catalyses a 2'-deoxyribonucleoside 5'-diphosphate + ATP = a 2'-deoxyribonucleoside 5'-triphosphate + ADP. The catalysed reaction is a ribonucleoside 5'-diphosphate + ATP = a ribonucleoside 5'-triphosphate + ADP. In terms of biological role, major role in the synthesis of nucleoside triphosphates other than ATP. The ATP gamma phosphate is transferred to the NDP beta phosphate via a ping-pong mechanism, using a phosphorylated active-site intermediate. In Bradyrhizobium sp. (strain ORS 278), this protein is Nucleoside diphosphate kinase.